The chain runs to 270 residues: Undecaprenyl-diphosphatase (270 aa).

7 consecutive transmembrane segments (helical) span residues 1–21, 92–112, 119–139, 150–170, 193–213, 223–243, and 250–270; these read MTWWEALLLGLIQGLTEFIPV, FRLGVFILVTLVPTGVAYVLF, AFGSPRFTSAMLVGTGVLLLL, LSGVKAFVVGVAQSCALVPGI, FSFLMLLPVVLGGTVLKGLEL, LSLGIGTVAAYGSGIGAIYVV, and GNLQYFAYYCFLIGGLGLWLL.

Belongs to the UppP family.

It localises to the cell inner membrane. The enzyme catalyses di-trans,octa-cis-undecaprenyl diphosphate + H2O = di-trans,octa-cis-undecaprenyl phosphate + phosphate + H(+). Functionally, catalyzes the dephosphorylation of undecaprenyl diphosphate (UPP). Confers resistance to bacitracin. This is Undecaprenyl-diphosphatase from Salinibacter ruber (strain DSM 13855 / M31).